The sequence spans 119 residues: Large ribosomal subunit protein uL18 (119 aa).

Belongs to the universal ribosomal protein uL18 family. Part of the 50S ribosomal subunit; part of the 5S rRNA/L5/L18/L25 subcomplex. Contacts the 5S and 23S rRNAs.

In terms of biological role, this is one of the proteins that bind and probably mediate the attachment of the 5S RNA into the large ribosomal subunit, where it forms part of the central protuberance. The sequence is that of Large ribosomal subunit protein uL18 from Clostridium botulinum (strain ATCC 19397 / Type A).